A 1357-amino-acid polypeptide reads, in one-letter code: MSYSFAEKKRIRKSFAKRASILPFPFLLATQIQSYTDFLQAEIAPGKRKNQGLQAAFNSVFPIESHSNNARLDFISYMLGSPVFDVKECQQRGLTYAAPLRARVRLTILDKEASKPTVKEVKEQEVYMGEIPLMTDTGSFVVNGTERVIVSQLHRSPGVFFEHDRGKTHSSGKLLFSARIIPYRGSWLDFEFDPKDYVYFRIDRRRKMPVTTLLKAMGYSPAQILADFFEFDHFILVDNKIFFNLIPERLRGELAGFDIVSEDGKVFVQKDKRITAKHVRDLQQANLTKIPVPEEFLLGKILAADLVDKETGEIIALANSEISETLLGRIRQTQSSEISTLFVNDLNYGPYISQTLRIDETTDQMSAQVAIYRMMRPGEPPTEEAVLALFNGLFYSPERYDLSVVGRMKFNRRVGREELTGSTTLSNDDIIDVIKILVELRNGRGEIDDIDHLGNRRVRSVGELAENQFRAGLARVEKAVKERLSQAESENLMPHDFINAKPVSSAIREFFGSSQLSQFMDQTNPLSEVTHKRRISALGPGGLTRERAGFEVRDVHPTHYGRVCPIETPEGPNIGLINSLALYARTNEYGFIETPYRMVRNGRVTEEVVYLSAIEESQYVIAQANANFDQNGVFTDEVVSCRHKNEFTLASRDQIEYVDIAPAQIVSVAASLIPFLEHDDANRALMGSNMQRQAVPCLRAEKPLVGTGIERVVAVHSGTAVRTIRGGVVDYVDASRIVIRVHDAEARAGEVGVDIYNLTKYTRSNQNTNINQRPIVRMGDVLSRDDVIADGASTDLGELALGQNMLIAFMPWNGLNFEDSILISERVVSDDRFTSIHIEELAAVSRDTKLGTEEITADIPNLSERQRARLDESGIVYIGAEVEAGDVLVGKVTPKSETQLTPEEKLLRAIFGEKASDVKDTSLHVPAGISGTVIDVQIFTREGVDRDKRSKQIIADELGRFKKDLADQMRIVEADAFQRAERLLTGKVAAGGPKKLAKNSTITRDYLENVEKHHWFDIRLVDENTSLQLEQIKDSLVQKRKLFDLAFEEKHRKLSQGDELPPGVQKMVKVYIAVKRRLQSGDKMAGRHGNKGVISKIVPIEDMPYMADGTPVDVVLNPLGVPSRMNIGQVLEVHLGWAAKELGKRVNEMLASQRNVSDIRDFLNKIYNNSGKQEDLTSLEDDEVLALARNLSSGVPFATPVFDGAHESEIKQMLKLAGLPESGQTTLYDGRTGEAFDRPVTVGYMHVLKLHHLVDDKMHARSTGPYSLVTQQPLGGKAQFGGQRFGEMEVWALEAYGASYTLQEMLTVKSDDVNGRTKVYESIVKGDHKIDAGMPESFNVLVKEIRSLGLDIDLEEH.

The protein belongs to the RNA polymerase beta chain family. The RNAP catalytic core consists of 2 alpha, 1 beta, 1 beta' and 1 omega subunit. When a sigma factor is associated with the core the holoenzyme is formed, which can initiate transcription.

It catalyses the reaction RNA(n) + a ribonucleoside 5'-triphosphate = RNA(n+1) + diphosphate. DNA-dependent RNA polymerase catalyzes the transcription of DNA into RNA using the four ribonucleoside triphosphates as substrates. This Nitrosomonas europaea (strain ATCC 19718 / CIP 103999 / KCTC 2705 / NBRC 14298) protein is DNA-directed RNA polymerase subunit beta.